The sequence spans 34 residues: Photosystem II reaction center protein Psb30 (34 aa).

The helical transmembrane segment at 7–27 (VAQLLALFVIITSGPAIIILI) threads the bilayer.

The protein belongs to the Psb30/Ycf12 family. PSII is composed of 1 copy each of membrane proteins PsbA, PsbB, PsbC, PsbD, PsbE, PsbF, PsbH, PsbI, PsbJ, PsbK, PsbL, PsbM, PsbT, PsbX, PsbY, PsbZ, Psb30/Ycf12, peripheral proteins of the oxygen-evolving complex and a large number of cofactors. It forms dimeric complexes.

It is found in the plastid. Its subcellular location is the chloroplast thylakoid membrane. Its function is as follows. A core subunit of photosystem II (PSII), probably helps stabilize the reaction center. The sequence is that of Photosystem II reaction center protein Psb30 from Guillardia theta (Cryptophyte).